The following is a 189-amino-acid chain: dTTP/UTP pyrophosphatase (189 aa).

D64 (proton acceptor) is an active-site residue.

It belongs to the Maf family. YhdE subfamily. Requires a divalent metal cation as cofactor.

The protein resides in the cytoplasm. The enzyme catalyses dTTP + H2O = dTMP + diphosphate + H(+). It catalyses the reaction UTP + H2O = UMP + diphosphate + H(+). Its function is as follows. Nucleoside triphosphate pyrophosphatase that hydrolyzes dTTP and UTP. May have a dual role in cell division arrest and in preventing the incorporation of modified nucleotides into cellular nucleic acids. This Syntrophomonas wolfei subsp. wolfei (strain DSM 2245B / Goettingen) protein is dTTP/UTP pyrophosphatase.